We begin with the raw amino-acid sequence, 262 residues long: WW domain-binding protein 2 (262 aa).

The 84-residue stretch at 1 to 84 folds into the GRAM domain; the sequence is MALNKNHSEG…YLMKDCEVKQ (84 aa). A Phosphotyrosine modification is found at Tyr-192. The short motif at 196–200 is the PPxY motif 1 element; that stretch reads PPPPY. The segment covering 197 to 206 has biased composition (pro residues); it reads PPPYPGPMEP. Residues 197 to 262 form a disordered region; sequence PPPYPGPMEP…YYPPEDKKTQ (66 aa). Residues 219–231 are compositionally biased toward low complexity; that stretch reads AAEAKAAEAAASA. Tyr-232 carries the post-translational modification Phosphotyrosine. Pro residues predominate over residues 246 to 255; the sequence is SQPPPPPYYP. A PPxY motif 2 motif is present at residues 249-253; sequence PPPPY.

As to quaternary structure, binds to the WW domain of YAP1, WWP1 and WWP2. Interacts with NEDD4. Interacts with ESR1 and UBE3A. Post-translationally, phosphorylated in repsonse to EGF as well as estrogen and progesterone hormones. Tyr-192 and Tyr-232 are phosphorylated by YES and SRC inducing nuclear translocation.

It is found in the cytoplasm. Its subcellular location is the nucleus. In terms of biological role, acts as a transcriptional coactivator of estrogen and progesterone receptors (ESR1 and PGR) upon hormone activation. In presence of estrogen, binds to ESR1-responsive promoters. Synergizes with YAP1 to enhance PGR activity. Modulates expression of post-synaptic scaffolding proteins via regulation of ESR1, ESR2 and PGR. The sequence is that of WW domain-binding protein 2 (Wbp2) from Rattus norvegicus (Rat).